The following is a 152-amino-acid chain: Putative RING finger protein 157L (152 aa).

An RING-type zinc finger spans residues 111–146 (CVVCYENEICIKIQPCNHFVVCKSCFNRLNTCPMCR).

It belongs to the IIV-6 157L family.

The chain is Putative RING finger protein 157L from Invertebrate iridescent virus 6 (IIV-6).